The chain runs to 589 residues: Aspartate--tRNA ligase (589 aa).

Glu-174 serves as a coordination point for L-aspartate. The aspartate stretch occupies residues 198–201; sequence QLFK. Arg-220 contributes to the L-aspartate binding site. ATP contacts are provided by residues 220 to 222 and Gln-229; that span reads RDE. His-448 contacts L-aspartate. ATP is bound at residue Glu-483. Arg-490 is a binding site for L-aspartate. 535–538 is a binding site for ATP; it reads GIDR.

This sequence belongs to the class-II aminoacyl-tRNA synthetase family. Type 1 subfamily. As to quaternary structure, homodimer.

The protein localises to the cytoplasm. It carries out the reaction tRNA(Asp) + L-aspartate + ATP = L-aspartyl-tRNA(Asp) + AMP + diphosphate. In terms of biological role, catalyzes the attachment of L-aspartate to tRNA(Asp) in a two-step reaction: L-aspartate is first activated by ATP to form Asp-AMP and then transferred to the acceptor end of tRNA(Asp). In Xylella fastidiosa (strain M12), this protein is Aspartate--tRNA ligase.